Reading from the N-terminus, the 315-residue chain is Heme oxygenase 2 (315 aa).

The span at 1–15 (MSSEVETSEGVDESE) shows a compositional bias: polar residues. Residues 1–29 (MSSEVETSEGVDESENNSTAPEKENHTKM) are disordered. S2 is modified (N-acetylserine). S2 bears the Phosphoserine mark. Residues 2 to 294 (SSEVETSEGV…TAMAVLRKPS (293 aa)) are Cytoplasmic-facing. H44, Y153, K198, and R202 together coordinate heme b. HRM repeat units lie at residues 263 to 268 (KCPFYA) and 280 to 285 (NCPFRT). An S-nitrosocysteine mark is found at C264 and C281. Residues 295–315 (LQLILAASVALVAGLLAWYYM) form a helical; Anchor for type IV membrane protein membrane-spanning segment.

The protein belongs to the heme oxygenase family. Post-translationally, a soluble form arises by proteolytic removal of the membrane anchor. S-nitrosylated by BLVRB. In terms of tissue distribution, widely distributed in body with a high concentration in the brain.

The protein localises to the microsome membrane. The protein resides in the endoplasmic reticulum membrane. It catalyses the reaction heme b + 3 reduced [NADPH--hemoprotein reductase] + 3 O2 = biliverdin IXalpha + CO + Fe(2+) + 3 oxidized [NADPH--hemoprotein reductase] + 3 H2O + H(+). With respect to regulation, inhibited by metalloporphyrins such as Sn- and Zn-protoporphyrins. Its function is as follows. Catalyzes the oxidative cleavage of heme at the alpha-methene bridge carbon, released as carbon monoxide (CO), to generate biliverdin IXalpha, while releasing the central heme iron chelate as ferrous iron. This Rattus norvegicus (Rat) protein is Heme oxygenase 2 (Hmox2).